The sequence spans 218 residues: ADP-sugar pyrophosphatase (218 aa).

Met1 carries the N-acetylmethionine modification. Ser10 bears the Phosphoserine mark. Trp27 is a binding site for substrate. Lys41 participates in a covalent cross-link: Glycyl lysine isopeptide (Lys-Gly) (interchain with G-Cter in SUMO2). Thr44 carries the phosphothreonine modification. Substrate contacts are provided by residues 45–46 (WE) and Arg83. A Nudix hydrolase domain is found at 56–196 (KSADAVSVIP…EQHLTVDAKV (141 aa)). Residue Ala95 coordinates Mg(2+). A Nudix box motif is present at residues 96-117 (GFIEDGESPEAAALRELEEETG). Residue Phe97 participates in substrate binding. 2 residues coordinate Mg(2+): Glu111 and Glu115. Position 132 (Asp132) interacts with substrate. Glu165 serves as a coordination point for Mg(2+). Lys209 and Lys217 each carry N6-acetyllysine.

It belongs to the Nudix hydrolase family. As to quaternary structure, homodimer. Interacts with PARG. Mg(2+) is required as a cofactor. Phosphorylation at Thr-44 is required for homodimer stability; dephosphorylation results in destabilization of the homodimer. Dephosphorylation at Thr-44 promotes the ATP-synthesis activity. Widely expressed. Most abundant in liver.

The protein resides in the nucleus. It carries out the reaction D-ribose 5-phosphate + ATP + H(+) = ADP-D-ribose + diphosphate. The catalysed reaction is ADP-D-ribose + H2O = D-ribose 5-phosphate + AMP + 2 H(+). The enzyme catalyses 8-oxo-dGDP + H2O = 8-oxo-dGMP + phosphate + H(+). Enzyme that can either act as an ADP-sugar pyrophosphatase in absence of diphosphate or catalyze the synthesis of ATP in presence of diphosphate. In absence of diphosphate, hydrolyzes with similar activities various modified nucleoside diphosphates such as ADP-ribose, ADP-mannose, ADP-glucose, 8-oxo-GDP and 8-oxo-dGDP. Can also hydrolyze other nucleotide sugars with low activity. In presence of diphosphate, mediates the synthesis of ATP in the nucleus by catalyzing the conversion of ADP-ribose to ATP and ribose 5-phosphate. Nuclear ATP synthesis takes place when dephosphorylated at Thr-44. Nuclear ATP generation is required for extensive chromatin remodeling events that are energy-consuming. Does not play a role in U8 snoRNA decapping activity. Binds U8 snoRNA. The polypeptide is ADP-sugar pyrophosphatase (Mus musculus (Mouse)).